A 242-amino-acid polypeptide reads, in one-letter code: Small ribosomal subunit protein uS2 (242 aa).

It belongs to the universal ribosomal protein uS2 family.

In Pseudoalteromonas translucida (strain TAC 125), this protein is Small ribosomal subunit protein uS2.